A 400-amino-acid polypeptide reads, in one-letter code: Gap junction alpha-8 protein (400 aa).

Residues 2 to 12 (GDWSFLGNILE) lie within the membrane without spanning it. Residues 13–21 (QVNEQSTVI) lie on the Cytoplasmic side of the membrane. A helical membrane pass occupies residues 22–42 (GRVWLTVLFIFRILILGTAAE). The Extracellular segment spans residues 43-71 (LVWGDEQSDFVCNTQQPGCENVCYDEAFP). Disulfide bonds link Cys54–Cys196, Cys61–Cys190, and Cys65–Cys185. The helical transmembrane segment at 72-92 (ISHIRLWVLQIIFVSTPSLVY) threads the bilayer. Topologically, residues 93–156 (FGHAVHHVRM…GTLLRTYILH (64 aa)) are cytoplasmic. Residues 104–118 (EKRKEREEAERRQQA) show a composition bias toward basic and acidic residues. Positions 104 to 139 (EKRKEREEAERRQQAEVDEEKLPLAPNQNKGNNPDG) are disordered. Residues 129 to 138 (PNQNKGNNPD) are compositionally biased toward polar residues. A helical transmembrane segment spans residues 157–177 (IIFKTLFEVGFIVGQYFLYGF). Residues 178 to 205 (RILPLYRCGRWPCPNLVDCFVSRPTEKT) are Extracellular-facing. A helical transmembrane segment spans residues 206 to 226 (IFIMFMLVVAAVSLFLNLVEI). Residues 227–400 (SHLILKRIRR…SRARSDDLTV (174 aa)) lie on the Cytoplasmic side of the membrane. Positions 323-400 (YAQAKEPEEE…SRARSDDLTV (78 aa)) are disordered. Positions 327 to 336 (KEPEEEKVKA) are enriched in basic and acidic residues. A compositionally biased stretch (acidic residues) spans 337–346 (EEEEEQEEEQ). Ser364 is subject to Phosphoserine; by CK2. The span at 381–392 (RSLSRLSKASSR) shows a compositional bias: low complexity.

The protein belongs to the connexin family. Alpha-type (group II) subfamily. As to quaternary structure, a hemichannel or connexon is composed of a hexamer of connexins. A functional gap junction is formed by the apposition of two hemichannels. Forms heteromeric channels with GJA3. During early stages of lens development, interacts with the C-terminus of MIP. Post-translationally, proteolytically cleaved by caspase-3 during lens development. Phosphorylated on Ser-364; which inhibits cleavage by caspase-3.

It localises to the cell membrane. The protein resides in the cell junction. Its subcellular location is the gap junction. Structural component of eye lens gap junctions. Gap junctions are dodecameric channels that connect the cytoplasm of adjoining cells. They are formed by the docking of two hexameric hemichannels, one from each cell membrane. Small molecules and ions diffuse from one cell to a neighboring cell via the central pore. This is Gap junction alpha-8 protein (GJA8) from Gallus gallus (Chicken).